Reading from the N-terminus, the 181-residue chain is Negative modulator of initiation of replication (181 aa).

3 interaction with DNA regions span residues 87–88, 116–120, and 150–156; these read AV, RTRVY, and NTNTGRK.

It belongs to the SeqA family. As to quaternary structure, homodimer. Polymerizes to form helical filaments.

It is found in the cytoplasm. In terms of biological role, negative regulator of replication initiation, which contributes to regulation of DNA replication and ensures that replication initiation occurs exactly once per chromosome per cell cycle. Binds to pairs of hemimethylated GATC sequences in the oriC region, thus preventing assembly of replication proteins and re-initiation at newly replicated origins. Repression is relieved when the region becomes fully methylated. The sequence is that of Negative modulator of initiation of replication from Shigella dysenteriae serotype 1 (strain Sd197).